We begin with the raw amino-acid sequence, 262 residues long: MLKVDHASVFFAARYGRTVHALDRVSFDIPERGFVVALGASGCGKSTLLNAIAGFLPLSDGRITLDGRAVEQPGADRGVVFQKDSLLPWKSVIDNVALGLKFAGVKRRERQARALELLRLVGLDEFAGAFPYELSGGMRQRVGIARALATNPDILLMDEPFGALDSLTREQMQELLVSIWDKTAKKVFFITHSIEEALFLGTQVLVMSPRPGRVVARFDLDFVRRFAETGDARSIKASPQFAELREEIRAILHSTEDLRSAA.

In terms of domain architecture, ABC transporter spans 4 to 234; it reads VDHASVFFAA…RFAETGDARS (231 aa). 39 to 46 serves as a coordination point for ATP; sequence GASGCGKS.

It belongs to the ABC transporter superfamily. Taurine importer (TC 3.A.1.17.1) family. In terms of assembly, the complex is composed of two ATP-binding proteins (TauB), two transmembrane proteins (TauC) and a solute-binding protein (TauA).

The protein localises to the cell inner membrane. It carries out the reaction taurine(out) + ATP + H2O = taurine(in) + ADP + phosphate + H(+). Part of the ABC transporter complex TauABC involved in taurine import. Responsible for energy coupling to the transport system. The polypeptide is Taurine import ATP-binding protein TauB (Rhizobium johnstonii (strain DSM 114642 / LMG 32736 / 3841) (Rhizobium leguminosarum bv. viciae)).